The sequence spans 197 residues: dTTP/UTP pyrophosphatase (197 aa).

The Proton acceptor role is filled by D70.

This sequence belongs to the Maf family. YhdE subfamily. It depends on a divalent metal cation as a cofactor.

It is found in the cytoplasm. The catalysed reaction is dTTP + H2O = dTMP + diphosphate + H(+). It carries out the reaction UTP + H2O = UMP + diphosphate + H(+). Nucleoside triphosphate pyrophosphatase that hydrolyzes dTTP and UTP. May have a dual role in cell division arrest and in preventing the incorporation of modified nucleotides into cellular nucleic acids. This Shigella sonnei (strain Ss046) protein is dTTP/UTP pyrophosphatase (yceF2).